A 269-amino-acid polypeptide reads, in one-letter code: 4-hydroxy-tetrahydrodipicolinate reductase (269 aa).

NAD(+) is bound by residues 8–13 (GVAGRM), 98–100 (GTT), and 122–125 (APNM). Residue His-156 is the Proton donor/acceptor of the active site. His-157 serves as a coordination point for (S)-2,3,4,5-tetrahydrodipicolinate. Lys-160 (proton donor) is an active-site residue. Residue 166–167 (GT) participates in (S)-2,3,4,5-tetrahydrodipicolinate binding.

This sequence belongs to the DapB family.

The protein localises to the cytoplasm. It catalyses the reaction (S)-2,3,4,5-tetrahydrodipicolinate + NAD(+) + H2O = (2S,4S)-4-hydroxy-2,3,4,5-tetrahydrodipicolinate + NADH + H(+). The enzyme catalyses (S)-2,3,4,5-tetrahydrodipicolinate + NADP(+) + H2O = (2S,4S)-4-hydroxy-2,3,4,5-tetrahydrodipicolinate + NADPH + H(+). It participates in amino-acid biosynthesis; L-lysine biosynthesis via DAP pathway; (S)-tetrahydrodipicolinate from L-aspartate: step 4/4. Functionally, catalyzes the conversion of 4-hydroxy-tetrahydrodipicolinate (HTPA) to tetrahydrodipicolinate. The protein is 4-hydroxy-tetrahydrodipicolinate reductase of Chromohalobacter salexigens (strain ATCC BAA-138 / DSM 3043 / CIP 106854 / NCIMB 13768 / 1H11).